We begin with the raw amino-acid sequence, 352 residues long: Matrix protein (352 aa).

The segment at 1-22 (MEPDIKSISSESMEGVSDFSPS) is disordered. The Nuclear export signal 1 signature appears at 106–115 (LLEELCSLKV). A Nuclear localization signal motif is present at residues 244–258 (RRAGKYYSVDYCRRK). Residues 268–276 (LGSIGGLSL) carry the Nuclear export signal 2 motif.

Belongs to the morbillivirus/respirovirus/rubulavirus M protein family. In terms of assembly, homomultimer. Interacts with host TRIM6; this interaction inhibits the IKBKE-dependent activation of the type I interferon signaling pathway. Interacts with host ANP32B; this interaction promotes M nuclear localization. In terms of processing, ubiquitinated; regulates matrix nuclear export.

The protein resides in the virion. It localises to the host cytoplasm. The protein localises to the host cell membrane. Its subcellular location is the host nucleus. Functionally, plays a crucial role in virion assembly and budding. Forms a shell at the inner face of the plasma membrane. Transits through the host nucleus before gaining the functional ability to localize and bud from the plasma membrane. Mediates together with fusion protein the incorporation of the glycoprotein to the viral particles. Also participates in the inhibition of the host interferon type I antiviral response by interacting with and thereby inhibiting host TRIM6. The protein is Matrix protein (M) of Cynopterus brachyotis (Lesser short-nosed fruit bat).